Consider the following 159-residue polypeptide: Lipoprotein signal peptidase (159 aa).

A run of 2 helical transmembrane segments spans residues 64–84 (SVQWLGLLSLAVTTGLLIWVV) and 89–109 (PPFWQGMAVAFLLGGTLGNGI). Residues D119 and D135 contribute to the active site. Residues 130-150 (IFNPADIAINLAVLCFLVDLW) form a helical membrane-spanning segment.

The protein belongs to the peptidase A8 family.

Its subcellular location is the cell inner membrane. The catalysed reaction is Release of signal peptides from bacterial membrane prolipoproteins. Hydrolyzes -Xaa-Yaa-Zaa-|-(S,diacylglyceryl)Cys-, in which Xaa is hydrophobic (preferably Leu), and Yaa (Ala or Ser) and Zaa (Gly or Ala) have small, neutral side chains.. It functions in the pathway protein modification; lipoprotein biosynthesis (signal peptide cleavage). This protein specifically catalyzes the removal of signal peptides from prolipoproteins. This is Lipoprotein signal peptidase from Parasynechococcus marenigrum (strain WH8102).